Reading from the N-terminus, the 78-residue chain is Acyl carrier protein (78 aa).

A Carrier domain is found at 1-76 (MSLEERVKEI…DVINYLKEKV (76 aa)). Ser36 is modified (O-(pantetheine 4'-phosphoryl)serine).

This sequence belongs to the acyl carrier protein (ACP) family. 4'-phosphopantetheine is transferred from CoA to a specific serine of apo-ACP by AcpS. This modification is essential for activity because fatty acids are bound in thioester linkage to the sulfhydryl of the prosthetic group.

It localises to the cytoplasm. It functions in the pathway lipid metabolism; fatty acid biosynthesis. Functionally, carrier of the growing fatty acid chain in fatty acid biosynthesis. The polypeptide is Acyl carrier protein (Aquifex aeolicus (strain VF5)).